We begin with the raw amino-acid sequence, 265 residues long: 3-methyl-2-oxobutanoate hydroxymethyltransferase (265 aa).

Mg(2+) is bound by residues D45 and D84. 3-methyl-2-oxobutanoate contacts are provided by residues 45–46 (DS), D84, and K112. Position 114 (E114) interacts with Mg(2+). The active-site Proton acceptor is E181.

Belongs to the PanB family. In terms of assembly, homodecamer; pentamer of dimers. Requires Mg(2+) as cofactor.

It localises to the cytoplasm. It carries out the reaction 3-methyl-2-oxobutanoate + (6R)-5,10-methylene-5,6,7,8-tetrahydrofolate + H2O = 2-dehydropantoate + (6S)-5,6,7,8-tetrahydrofolate. It participates in cofactor biosynthesis; (R)-pantothenate biosynthesis; (R)-pantoate from 3-methyl-2-oxobutanoate: step 1/2. In terms of biological role, catalyzes the reversible reaction in which hydroxymethyl group from 5,10-methylenetetrahydrofolate is transferred onto alpha-ketoisovalerate to form ketopantoate. This Yersinia pseudotuberculosis serotype O:1b (strain IP 31758) protein is 3-methyl-2-oxobutanoate hydroxymethyltransferase.